Here is a 269-residue protein sequence, read N- to C-terminus: Imidazoleglycerol-phosphate dehydratase 1, chloroplastic (269 aa).

2 disordered regions span residues 1-31 (MTTA…GSGG) and 54-73 (SGVG…VSSR). A chloroplast-targeting transit peptide spans 1–52 (MTTAPFVSPSLPRLHSARASPFPKPSVGSGGGVAFPARTYGSSLRLRSAVMS). Substrate-binding positions include glutamate 83, 109 to 117 (HMLDQLASH), 135 to 139 (HHSNE), arginine 161, and arginine 183. Mn(2+) is bound by residues histidine 109, histidine 135, histidine 136, and glutamate 139. The Mn(2+) site is built by histidine 207, histidine 231, histidine 232, and glutamate 235. Substrate-binding positions include 231 to 239 (HHIIEATFK) and 261 to 263 (SSK).

It belongs to the imidazoleglycerol-phosphate dehydratase family. The cofactor is Mn(2+).

Its subcellular location is the plastid. The protein localises to the chloroplast. The catalysed reaction is D-erythro-1-(imidazol-4-yl)glycerol 3-phosphate = 3-(imidazol-4-yl)-2-oxopropyl phosphate + H2O. Its pathway is amino-acid biosynthesis; L-histidine biosynthesis; L-histidine from 5-phospho-alpha-D-ribose 1-diphosphate: step 6/9. This Triticum aestivum (Wheat) protein is Imidazoleglycerol-phosphate dehydratase 1, chloroplastic.